Consider the following 161-residue polypeptide: Dihydrofolate reductase (161 aa).

The DHFR domain maps to 2 to 157 (TLSIIVAHDK…IPHTFLHLVR (156 aa)). Residue 6-8 (IVA) participates in substrate binding. Residues 7-8 (VA) and 15-20 (IGYQNQ) each bind NADP(+). Asp-28 provides a ligand contact to substrate. NADP(+) is bound at residue 44-47 (GRKT). Position 58 (Arg-58) interacts with substrate. NADP(+)-binding positions include 63–66 (LTNQ) and 93–98 (FGGQTL). Thr-112 contributes to the substrate binding site.

The protein belongs to the dihydrofolate reductase family.

It carries out the reaction (6S)-5,6,7,8-tetrahydrofolate + NADP(+) = 7,8-dihydrofolate + NADPH + H(+). The protein operates within cofactor biosynthesis; tetrahydrofolate biosynthesis; 5,6,7,8-tetrahydrofolate from 7,8-dihydrofolate: step 1/1. Its function is as follows. Key enzyme in folate metabolism. Catalyzes an essential reaction for de novo glycine and purine synthesis, and for DNA precursor synthesis. The protein is Dihydrofolate reductase (folA) of Staphylococcus epidermidis.